Here is a 503-residue protein sequence, read N- to C-terminus: MSKLRVMSLFSGIGAFEAALRNIGVEYELVGFSEIDKYAIKSYCAIHNADEQLNFGDVSKIDKKKLPEFDLLVGGSPCQSFSVAGYRKGFEDTRGTLFFQYIDTLKEKQPRYFVFENVKGLINHDKGNTLNIMAESFSEVGYRIDLELLNSKFFNVPQNRERIYIIGVREDLIENDEWVVEKGRNDVLSKGKKRLKELNIKSFNFKWSAQDIVGRRLREILEEYVDEKYYLSEEKTSKLIEQIEKPKEKDVVFVGGINVGKRWLNNGKTYSRNFKQGNRVYDSNGIATTLTSQSVGGLGGQTSLYKVEDPIMIGHIDLKGHDAIKRVYSPDGVSPTLTTMGEGHREPKIAVEYVGNINPSGKGMNDQVYNSNGLSPTLTTNKGEGVKISVPNPEIRPVLTPEREEKRQNGRRFKEDDEPAFTVNTIDRHGVAIGEYPKYRIRKLTPLECWRLQAFDEEDFEKALSVGISNSQLYKQAGNSITVTVLESIFKELIHTYVNEESE.

Residues 4–500 (LRVMSLFSGI…KELIHTYVNE (497 aa)) form the SAM-dependent MTase C5-type domain. The active site involves cysteine 78.

It belongs to the class I-like SAM-binding methyltransferase superfamily. C5-methyltransferase family.

It catalyses the reaction a 2'-deoxycytidine in DNA + S-adenosyl-L-methionine = a 5-methyl-2'-deoxycytidine in DNA + S-adenosyl-L-homocysteine + H(+). Functionally, a methyltransferase that methylates C-? within the sequences 5'-GGCC-3' and 5'-GAGCTC-3'. A methyltransferase that methylates C-1 within the sequences 5'-GGCC-3' and C-2 in 5'-GCNGC-3'. Modification confers resistance against restriction enzymes that recognize these sequences. The sequence is that of Orphan methyltransferase M.Rho11sI from Bacillus subtilis (Bacteriophage rho-11s).